The following is a 161-amino-acid chain: Decarboxylase (161 aa).

An EthD domain is found at 29-131; sequence QGMSEEAYRK…VGDHENFADT (103 aa).

This sequence belongs to the tpcK family.

It catalyses the reaction atrochrysone carboxylate + H(+) = atrochrysone + CO2. It participates in secondary metabolite biosynthesis. Functionally, decarboxylase; part of the gene cluster that mediates the biosynthesis of monodictyphenone, a prenyl xanthone derivative. The pathway begins with the synthesis of atrochrysone thioester by the polyketide synthase (PKS) mdpG. The atrochrysone carboxyl ACP thioesterase mdpF then breaks the thioester bond and releases the atrochrysone carboxylic acid from mdpG. The atrochrysone carboxylic acid is then converted to atrochrysone which is further transformed into emodin anthrone by mdpH-1 and mdpH-2. Emodin is further modified to yield monodictyphenone via several steps involving mdpB, mdpC mdpJ, mdpK and mdpL. These enzymes with xptA, xptB and xptC are also proposed to be involved in the synthesis of shamixanthone from emodin. Especially, direct reduction of emodin by the short chain dehydrogenase mdpC followed by dehydration catalyzed by the scytalone dehydratase-like protein mdpB gives loss of oxygen and formation of chrysophanol intermediate in two simple steps. The chain is Decarboxylase from Emericella nidulans (strain FGSC A4 / ATCC 38163 / CBS 112.46 / NRRL 194 / M139) (Aspergillus nidulans).